The chain runs to 364 residues: Probable endopolygalacturonase B (364 aa).

Positions 1-20 are cleaved as a signal peptide; it reads MHFFQSSLVAATMGAALVAA. Positions 21–29 are excised as a propeptide; the sequence is APAADLETR. Cysteines 32 and 47 form a disulfide. N-linked (GlcNAc...) asparagine glycans are attached at residues asparagine 138 and asparagine 141. PbH1 repeat units follow at residues 159 to 188, 189 to 210, 211 to 231, 240 to 261, 269 to 291, and 303 to 324; these read SDHL…DVGS, STYI…AVNS, GEHI…SIGS, VNDV…RIKT, VTGV…VVQQ, and TNGV…TSSA. The active-site Proton donor is the aspartate 203. A disulfide bond links cysteine 205 and cysteine 221. Histidine 225 is a catalytic residue. Cysteine 331 and cysteine 336 form a disulfide bridge. Asparagine 338 is a glycosylation site (N-linked (GlcNAc...) asparagine). The cysteines at positions 355 and 364 are disulfide-linked.

The protein belongs to the glycosyl hydrolase 28 family.

The protein resides in the secreted. The enzyme catalyses (1,4-alpha-D-galacturonosyl)n+m + H2O = (1,4-alpha-D-galacturonosyl)n + (1,4-alpha-D-galacturonosyl)m.. Its function is as follows. Involved in maceration and soft-rotting of plant tissue. Hydrolyzes the 1,4-alpha glycosidic bonds of de-esterified pectate in the smooth region of the plant cell wall. In Aspergillus fumigatus (strain CBS 144.89 / FGSC A1163 / CEA10) (Neosartorya fumigata), this protein is Probable endopolygalacturonase B (pgaB).